The sequence spans 1988 residues: Protein Ycf2 (1988 aa).

1337-1344 (GSIGTGRS) contacts ATP. A disordered region spans residues 1377-1396 (SDDDSDDIDDSGDIDDSDDI).

The protein belongs to the Ycf2 family.

Its subcellular location is the plastid. The protein localises to the chloroplast stroma. Its function is as follows. Probable ATPase of unknown function. Its presence in a non-photosynthetic plant (Epifagus virginiana) and experiments in tobacco indicate that it has an essential function which is probably not related to photosynthesis. The sequence is that of Protein Ycf2 from Cucumis sativus (Cucumber).